A 255-amino-acid polypeptide reads, in one-letter code: Large ribosomal subunit protein uL2 (255 aa).

Residues 211 to 235 are disordered; that stretch reads PHGGGNHQHVGHATTTKRDDPAGKK.

Belongs to the universal ribosomal protein uL2 family.

The chain is Large ribosomal subunit protein uL2 (rpl8) from Dictyostelium discoideum (Social amoeba).